Consider the following 591-residue polypeptide: MEKRTSYCGELNEAHIGQSVVLHGWVQKRRDLGGLIFIDLRDREGIVQVVFNPEFSKEALEIADSVRNEFVVTIKGTVHARGEKAINEKLATGKVEVLAEEITILNTSKTPPFYIEDGVNVSDELRLKYRYLDLRRPEMNNIFKMRHTVTRTFRNKLDALGFFDIETPYLTKSTPEGARDYLVPSRVYPGNFYALPQSPQILKQLLMTAGFDKYYQIVRCFRDEDLRGDRQPEFTQIDLETSFLTKEEIQAITEDMLVDVVKEAKNITIDKPFPRMTYKEAMDRFGSDKPDIRFGLELQNVSDVVKDVDFKVFQSAIENGGEVKAINAKSAAANFSRKDLDALGVFVANYGAKGLAWLKVEASELKGPIAKFFPEDKAADLKAALQAEDGDLLLFAADKADIVAASLGALRNKLGKDLNLINEEELAFLWVTDWPLFEYDEEAGRYVSAHHPFTLPKEEDIPLLETDSSKVMAEAYDIVLNGYEIGGGSLRIYKKEVQESMFRALGFTDESAKEQFGFLMDALEYGTPPHGGIALGLDRIVMILAGRNNLRDTIAFPKTGSAVDPLTNAPGEVSAAQLAELKLETVKKETN.

Glutamate 176 is a binding site for L-aspartate. Residues 200 to 203 form an aspartate region; sequence QILK. Arginine 222 provides a ligand contact to L-aspartate. ATP is bound by residues 222-224 and glutamine 231; that span reads RDE. Residue histidine 450 participates in L-aspartate binding. Residue glutamate 484 participates in ATP binding. Arginine 491 contributes to the L-aspartate binding site. Position 536 to 539 (536 to 539) interacts with ATP; it reads GLDR.

This sequence belongs to the class-II aminoacyl-tRNA synthetase family. Type 1 subfamily. In terms of assembly, homodimer.

Its subcellular location is the cytoplasm. The enzyme catalyses tRNA(Asp) + L-aspartate + ATP = L-aspartyl-tRNA(Asp) + AMP + diphosphate. Functionally, catalyzes the attachment of L-aspartate to tRNA(Asp) in a two-step reaction: L-aspartate is first activated by ATP to form Asp-AMP and then transferred to the acceptor end of tRNA(Asp). This Listeria monocytogenes serotype 4a (strain HCC23) protein is Aspartate--tRNA ligase.